Consider the following 992-residue polypeptide: MATIMIGSMAISVPNTHVSRASNSVMPVQAVQMAKQVPSARGVLYTLKREGSTQVIKHEEALRKFQEAFDQDVGIQRRLLVNKHSSIQSTKEGWFDLASLNFRAGSSKEAAIARRKQEEEDFLNGKYEQQFYAGVSATKSMKFEGGSVGFRTKYWRPTPKKTKERRATSQCRKPTYVLEEVLSIASKSGKLVEFITGKGKRVKVCYVRKHGAILPKFSLPHEEGKYIHQELQYASTYEFLPYICMFAKYKSINADDITYGDSGLLFDERSSLTTNHTKLPYFVVRGRRNGKLVNALEVVENMEDIQHYSQNPEAQFFRGWKKVFDKMPPHVENHECTIDFTNEQCGELAAAISQSIFPVKKLSCKQCRQHIKHLSWEEYKQFLLAHMGCHGAEWETFQEIDGMRYVKRVIETSTAENASLQTSLEIVRLTQNYKSTHMLQIQDINKALMKGPSVTQSELEQASKQLLAMTQWWKNHMALTDEDALKVFRNKRSSKALLNPSLLCDNQLDKNGNFVWGERGRHSKRFFANYFEEVVPSEGYSKYVIRTNPNGQRELAIGSLIVPLDFERARMALQGKSVTREPITMSCISRQDGNFVYPCCCVTHDDGKAFYSELKSPTKRHLVIGTSGDPKYIDLPATDADRMYIAKEGFCYLNIFLAMLVNVNEDEAKDFTKMVRDVIVPRLGKWPTMLDVATAAYMLTVFHPETRNAELPRILVDHACQTMHVIDSFGSLTVGYHVLKAGTVNQLIQFASNDLQSEMKFYRVGGEVQQRMKCETALITSIFKPKRMIQILENDPYILLMGLVSPSILIHMYRMKHFEKGVELWISKEHSVAKIFIILGQLTKRVAANDVLLEQLEMISETSERFMSILEDCPQAPHSYKTAKDLLTMYIEGKASNNQLVENGFVDMNDKLYMAYEKNLLRSLEAGMARIKLVGKIFYNMAIEKICSTYGEMFDKESCRRKQRIFRKLCECVLHECPVTPKKCKKYTFPKM.

A Peptidase S30 domain is found at 168–308; it reads TSQCRKPTYV…VENMEDIQHY (141 aa). Catalysis depends on for P1 proteinase activity residues His221, Glu230, and Ser262. The Involved in interaction with stylet and aphid transmission motif lies at 361–364; the sequence is KLSC. The short motif at 617-619 is the Involved in virions binding and aphid transmission element; that stretch reads PTK. In terms of domain architecture, Peptidase C6 spans 643–765; it reads MYIAKEGFCY…QSEMKFYRVG (123 aa). Catalysis depends on for helper component proteinase activity residues Cys651 and His724.

Belongs to the potyviridae P3N-PIPO polyprotein family. As to quaternary structure, interacts (via PIPO domain) with host PCaP1 protein; this interaction may help to anchor the movement complex to the plasma membrane from which the complex could move to the plasmodesmata. In terms of processing, potyviral RNA is expressed as two polyproteins which undergo post-translational proteolytic processing. Genome polyprotein is processed by NIa-pro, P1 and HC-pro proteinases resulting in the production of at least ten individual proteins. P3N-PIPO is cleaved by P1 and HC-pro proteinases resulting in the production of three individual proteins. The P1 proteinase and the HC-pro cleave only their respective C-termini autocatalytically.

It localises to the host cell junction. It is found in the host plasmodesma. It carries out the reaction Hydrolyzes a Gly-|-Gly bond at its own C-terminus, commonly in the sequence -Tyr-Xaa-Val-Gly-|-Gly, in the processing of the potyviral polyprotein.. In terms of biological role, required for aphid transmission and also has proteolytic activity. Only cleaves a Gly-Gly dipeptide at its own C-terminus. Interacts with virions and aphid stylets. Acts as a suppressor of RNA-mediated gene silencing, also known as post-transcriptional gene silencing (PTGS), a mechanism of plant viral defense that limits the accumulation of viral RNAs. May have RNA-binding activity. Its function is as follows. Allows efficient cell to cell propagation, by bypassing the host cell wall barrier. Transports viral genome to neighboring plant cells directly through plasmosdesmata, without any budding. The chain is P3N-PIPO polyprotein from Soybean mosaic virus (strain G2) (SMV).